Here is a 234-residue protein sequence, read N- to C-terminus: Coiled-coil domain-containing protein 194 (234 aa).

The first 43 residues, 1–43 (MAEPGPEPGRAWRLLALCGAAVFLAAAAAGGALVAWNLAASTA), serve as a signal peptide directing secretion. The segment at 44 to 63 (RSPRCPEPEQMNATVRPPDS) is disordered. Positions 67–171 (VEELRRRLAE…LQRAGAAEAA (105 aa)) form a coiled coil. The tract at residues 194 to 234 (GTLRKESRLRPRSGSRTKPSISHRPKSGSTKGCRRPPRDPQ) is disordered. The span at 203-219 (RPRSGSRTKPSISHRPK) shows a compositional bias: basic residues.

The sequence is that of Coiled-coil domain-containing protein 194 from Mus musculus (Mouse).